The chain runs to 97 residues: Serine protease inhibitor Kazal-type 13 (97 aa).

The signal sequence occupies residues 1 to 26 (MTRRGCWPHRIIFSLILLTWTHVTLA). Residues 36-97 (NWPKPPCKMY…IEFVKYGKCE (62 aa)) enclose the Kazal-like domain. Cystine bridges form between C42-C78, C56-C75, and C64-C96.

As to expression, restricted to the epididymis, with highest levels in the initial segment, including epithelial cells, lumen, and sperm (at protein level). Localizes to the sperm heads, where it is restricted to the acrosomal region in epididymal spermatozoa, but not in testicular spermatozoa (at protein level).

Its subcellular location is the secreted. May be a serine protease inhibitor. Essential for sperm maturation and fertility. Inhibits sperm acrosome reaction, protecting sperm from premature reaction. This chain is Serine protease inhibitor Kazal-type 13 (Spink13), found in Rattus norvegicus (Rat).